We begin with the raw amino-acid sequence, 259 residues long: Protein CWC15 homolog (259 aa).

The disordered stretch occupies residues 1 to 182; that stretch reads MTTAARPTFD…EKKQEDERIR (182 aa). Over residues 52–71 the composition is skewed to basic and acidic residues; it reads DENRNRDFRKELEEREREAR. Composition is skewed to low complexity over residues 72–82 and 114–126; these read SGTGATSSSSG and QQQAQQAAQQQAA. The segment covering 129–150 has biased composition (acidic residues); it reads DADEPLDNDSSDSDSDSDDDDA. Residues 150-182 are a coiled coil; the sequence is AALLAELQKIKQERLQETARRESEKKQEDERIR. The span at 157–182 shows a compositional bias: basic and acidic residues; sequence QKIKQERLQETARRESEKKQEDERIR.

This sequence belongs to the CWC15 family.

Involved in pre-mRNA splicing. The sequence is that of Protein CWC15 homolog (c12.1) from Drosophila melanogaster (Fruit fly).